A 286-amino-acid chain; its full sequence is Bifunctional protein FolD (286 aa).

Residues Gly-165–Ser-167, Ser-190, and Ile-231 contribute to the NADP(+) site.

The protein belongs to the tetrahydrofolate dehydrogenase/cyclohydrolase family. In terms of assembly, homodimer.

The enzyme catalyses (6R)-5,10-methylene-5,6,7,8-tetrahydrofolate + NADP(+) = (6R)-5,10-methenyltetrahydrofolate + NADPH. It carries out the reaction (6R)-5,10-methenyltetrahydrofolate + H2O = (6R)-10-formyltetrahydrofolate + H(+). It participates in one-carbon metabolism; tetrahydrofolate interconversion. In terms of biological role, catalyzes the oxidation of 5,10-methylenetetrahydrofolate to 5,10-methenyltetrahydrofolate and then the hydrolysis of 5,10-methenyltetrahydrofolate to 10-formyltetrahydrofolate. This chain is Bifunctional protein FolD, found in Thermodesulfovibrio yellowstonii (strain ATCC 51303 / DSM 11347 / YP87).